The following is a 70-amino-acid chain: Small ribosomal subunit protein bS21 (70 aa).

It belongs to the bacterial ribosomal protein bS21 family.

The sequence is that of Small ribosomal subunit protein bS21 from Helicobacter hepaticus (strain ATCC 51449 / 3B1).